We begin with the raw amino-acid sequence, 532 residues long: Bone morphogenetic protein receptor type-1A (532 aa).

The signal sequence occupies residues 1-23 (MPQLYIYIRLLGAYLFIISRVQG). Residues 24–152 (QNLDSMLHGT…IGPFFDGSIR (129 aa)) lie on the Extracellular side of the membrane. Intrachain disulfides connect Cys-61–Cys-82, Cys-63–Cys-67, and Cys-76–Cys-100. N-linked (GlcNAc...) asparagine glycosylation occurs at Asn-73. A mediates specificity for BMP ligand region spans residues 107–109 (DFQ). Intrachain disulfides connect Cys-110/Cys-124 and Cys-125/Cys-130. The chain crosses the membrane as a helical span at residues 153-176 (WLVLLISMAVCIIAMIIFSSCFCY). Topologically, residues 177-532 (KHYCKSISSR…KMVESQDVKI (356 aa)) are cytoplasmic. A GS domain is found at 204–233 (ESLKDLIDQSQSSGSGSGLPLLVQRTIAKQ). A Protein kinase domain is found at 234–525 (IQMVRQVGKG…RIKKTLAKMV (292 aa)). ATP contacts are provided by residues 240 to 248 (VGKGRYGEV) and Lys-261. The Proton acceptor role is filled by Asp-362.

It belongs to the protein kinase superfamily. TKL Ser/Thr protein kinase family. TGFB receptor subfamily. As to quaternary structure, interacts with low affinity with GDF5; positively regulates chondrocyte differentiation. Interacts with BMP4. Interacts with SCUBE3. Interacts with TSC22D1/TSC-22. Interacts with BMP2; the interaction may induce HAMP expression. Interacts with BMP6. Interacts with heterodimers composed of BMP2 and BMP6 in vitro; the interaction may induce HAMP expression. Interacts with TGFBR3. Requires Mg(2+) as cofactor. The cofactor is Mn(2+). Post-translationally, glycosylated. In terms of tissue distribution, highly expressed in skeletal muscle.

The protein localises to the cell membrane. Its subcellular location is the cell surface. The enzyme catalyses L-threonyl-[receptor-protein] + ATP = O-phospho-L-threonyl-[receptor-protein] + ADP + H(+). It carries out the reaction L-seryl-[receptor-protein] + ATP = O-phospho-L-seryl-[receptor-protein] + ADP + H(+). In terms of biological role, on ligand binding, forms a receptor complex consisting of two type II and two type I transmembrane serine/threonine kinases. Type II receptors phosphorylate and activate type I receptors which autophosphorylate, then bind and activate SMAD transcriptional regulators. Receptor for BMP2, BMP4, GDF5 and GDF6. Positively regulates chondrocyte differentiation through GDF5 interaction. Mediates induction of adipogenesis by GDF6. May promote the expression of HAMP, potentially via its interaction with BMP2. This Homo sapiens (Human) protein is Bone morphogenetic protein receptor type-1A (BMPR1A).